The sequence spans 376 residues: Transcriptional regulator STP4 (376 aa).

Disordered regions lie at residues 25–58 (QNYC…PHAS), 89–122 (SSNS…SNSS), and 137–210 (VNCI…NWKP). Composition is skewed to low complexity over residues 32–50 (SPSP…TSPP) and 89–103 (SSNS…YSPT). 2 stretches are compositionally biased toward polar residues: residues 146-183 (PRST…LSVK) and 191-200 (EPQNSNTIIS). The segment at 241–263 (HICKYCERGFARPNDLFRHVKCH) adopts a C2H2-type zinc-finger fold.

It is found in the nucleus. Its function is as follows. Probable transcription factor involved in response to cell wall damage. This Candida albicans (strain SC5314 / ATCC MYA-2876) (Yeast) protein is Transcriptional regulator STP4 (STP4).